The sequence spans 146 residues: Hemoglobin subunit beta (146 aa).

Positions 2–146 (HWSAEEKQLI…VAHALARKYH (145 aa)) constitute a Globin domain. Heme b is bound by residues H63 and H92.

The protein belongs to the globin family. As to quaternary structure, heterotetramer of two alpha chains and two beta chains. In terms of tissue distribution, red blood cells.

Functionally, involved in oxygen transport from the lung to the various peripheral tissues. The polypeptide is Hemoglobin subunit beta (HBB) (Phasianus colchicus colchicus (Black-necked pheasant)).